The sequence spans 554 residues: Malate synthase 2 (554 aa).

Arg-177 acts as the Proton acceptor in catalysis. Asp-457 acts as the Proton donor in catalysis. An SKL peroxisome targeting motif motif is present at residues Ser-552 to Leu-554.

This sequence belongs to the malate synthase family. In terms of assembly, interacts with PEX9.

The protein localises to the peroxisome matrix. The enzyme catalyses glyoxylate + acetyl-CoA + H2O = (S)-malate + CoA + H(+). In terms of biological role, allantoin metabolism-specific malate synthase involved in the recycling the glyoxylate generated during allantoin degradation by the ureidoglycollate (UG) hydrolase reaction. In Saccharomyces cerevisiae (strain ATCC 204508 / S288c) (Baker's yeast), this protein is Malate synthase 2.